Consider the following 500-residue polypeptide: 2-isopropylmalate synthase (500 aa).

The 262-residue stretch at leucine 5 to tyrosine 266 folds into the Pyruvate carboxyltransferase domain. Mn(2+) is bound by residues aspartate 14, histidine 202, histidine 204, and asparagine 238. Residues lysine 389–aspartate 500 form a regulatory domain region.

The protein belongs to the alpha-IPM synthase/homocitrate synthase family. LeuA type 1 subfamily. As to quaternary structure, homodimer. Mn(2+) is required as a cofactor.

It localises to the cytoplasm. The enzyme catalyses 3-methyl-2-oxobutanoate + acetyl-CoA + H2O = (2S)-2-isopropylmalate + CoA + H(+). It functions in the pathway amino-acid biosynthesis; L-leucine biosynthesis; L-leucine from 3-methyl-2-oxobutanoate: step 1/4. Its function is as follows. Catalyzes the condensation of the acetyl group of acetyl-CoA with 3-methyl-2-oxobutanoate (2-ketoisovalerate) to form 3-carboxy-3-hydroxy-4-methylpentanoate (2-isopropylmalate). The chain is 2-isopropylmalate synthase from Parabacteroides distasonis (strain ATCC 8503 / DSM 20701 / CIP 104284 / JCM 5825 / NCTC 11152).